The primary structure comprises 357 residues: NADH-quinone oxidoreductase subunit H (357 aa).

A run of 8 helical transmembrane segments spans residues 20–40, 92–112, 127–147, 165–185, 206–226, 268–288, 294–314, and 329–349; these read WLVV…ILCV, ILFI…WAVV, LLYV…AGWA, VSYE…SGSL, FLSW…ISAV, ILLS…PIDI, IPGW…FIWF, and LGWK…AIWM.

Belongs to the complex I subunit 1 family. NDH-1 is composed of 14 different subunits. Subunits NuoA, H, J, K, L, M, N constitute the membrane sector of the complex.

The protein resides in the cell inner membrane. It catalyses the reaction a quinone + NADH + 5 H(+)(in) = a quinol + NAD(+) + 4 H(+)(out). Its function is as follows. NDH-1 shuttles electrons from NADH, via FMN and iron-sulfur (Fe-S) centers, to quinones in the respiratory chain. The immediate electron acceptor for the enzyme in this species is believed to be ubiquinone. Couples the redox reaction to proton translocation (for every two electrons transferred, four hydrogen ions are translocated across the cytoplasmic membrane), and thus conserves the redox energy in a proton gradient. This subunit may bind ubiquinone. This chain is NADH-quinone oxidoreductase subunit H, found in Bordetella avium (strain 197N).